Consider the following 436-residue polypeptide: Probable cinnamyl alcohol dehydrogenase 8B (436 aa).

Cys-120 lines the Zn(2+) pocket. Residue Thr-122 participates in NADP(+) binding. Zn(2+)-binding residues include His-142, Glu-143, Cys-173, Cys-176, Cys-179, Cys-187, and Cys-236. NADP(+) contacts are provided by residues Thr-240, 261 to 266 (GLGGLG), 284 to 289 (STSPGK), Thr-324, Gly-348, and 371 to 373 (NCV).

It belongs to the zinc-containing alcohol dehydrogenase family. As to quaternary structure, homodimer. The cofactor is Zn(2+).

It catalyses the reaction (E)-cinnamyl alcohol + NADP(+) = (E)-cinnamaldehyde + NADPH + H(+). The catalysed reaction is (E)-coniferol + NADP(+) = (E)-coniferaldehyde + NADPH + H(+). It carries out the reaction (E)-sinapyl alcohol + NADP(+) = (E)-sinapaldehyde + NADPH + H(+). The enzyme catalyses (E)-4-coumaroyl alcohol + NADP(+) = (E)-4-coumaraldehyde + NADPH + H(+). It catalyses the reaction (E)-caffeyl alcohol + NADP(+) = (E)-caffeyl aldehyde + NADPH + H(+). The protein operates within aromatic compound metabolism; phenylpropanoid biosynthesis. In terms of biological role, involved in lignin biosynthesis. Catalyzes the final step specific for the production of lignin monomers. Catalyzes the NADPH-dependent reduction of coniferaldehyde, 5-hydroxyconiferaldehyde, sinapaldehyde, 4-coumaraldehyde and caffeyl aldehyde to their respective alcohols. This chain is Probable cinnamyl alcohol dehydrogenase 8B, found in Oryza sativa subsp. japonica (Rice).